A 485-amino-acid chain; its full sequence is Adenylate kinase 8 (485 aa).

2 adenylate kinase regions span residues 58 to 258 (PRVF…TFVL) and 269 to 471 (PRIL…SYIV). 67-72 (ASGKHT) lines the ATP pocket. The NMP 1 stretch occupies residues 87-113 (TPENVLSSDVSLLVKEAQSYRDKGQEV). AMP is bound by residues 140-143 (GFPK) and glutamine 147. The tract at residues 177 to 206 (GKRIDITDGEVYHTTFDWPSDPAVQRNLVE) is LID 1. Arginine 218 serves as a coordination point for AMP. 278 to 283 (GSGRSL) provides a ligand contact to ATP. An NMP 2 region spans residues 298 to 327 (CCGQVLKEAVADQTKLGELIQPYIENDQQV). AMP is bound by residues 325-327 (QQV), 354-357 (GFPQ), and glutamine 361. The tract at residues 391–424 (LCMTDPVSGERYHSIYKPAPRSEVQERLQQNPKY) is LID 2. Residue arginine 432 coordinates AMP.

Belongs to the adenylate kinase family.

It is found in the cytoplasm. The protein localises to the cytosol. The catalysed reaction is AMP + ATP = 2 ADP. The enzyme catalyses a 2'-deoxyribonucleoside 5'-diphosphate + ATP = a 2'-deoxyribonucleoside 5'-triphosphate + ADP. It carries out the reaction a ribonucleoside 5'-diphosphate + ATP = a ribonucleoside 5'-triphosphate + ADP. In terms of biological role, nucleoside monophosphate (NMP) kinase that catalyzes the reversible transfer of the terminal phosphate group between nucleoside triphosphates and monophosphates. Has highest activity toward AMP, and weaker activity toward dAMP, CMP and dCMP. Also displays broad nucleoside diphosphate kinase activity. The polypeptide is Adenylate kinase 8 (ak8) (Xenopus laevis (African clawed frog)).